A 107-amino-acid chain; its full sequence is MAMKKIRKGDNVIILSGKDKGKQSTVIKFESVEKVIVRDVNRVKSHVKPNPSKNIVGGIVEIEKPIHVSNIAIFNSDKNKADRVGFRFNESGNKVRYFKSDGTLIDL.

Belongs to the universal ribosomal protein uL24 family. As to quaternary structure, part of the 50S ribosomal subunit.

One of two assembly initiator proteins, it binds directly to the 5'-end of the 23S rRNA, where it nucleates assembly of the 50S subunit. Functionally, one of the proteins that surrounds the polypeptide exit tunnel on the outside of the subunit. This chain is Large ribosomal subunit protein uL24, found in Nitrosomonas eutropha (strain DSM 101675 / C91 / Nm57).